A 984-amino-acid chain; its full sequence is Shutoff protein (984 aa).

The interval 131 to 231 (GVAAESDPSD…DLERDALVAP (101 aa)) is disordered. Over residues 137–147 (DPSDDEPDPEP) the composition is skewed to acidic residues. Residues 148–159 (EYDHREADHDSD) are compositionally biased toward basic and acidic residues. A compositionally biased stretch (acidic residues) spans 176–186 (VDEEPQDDSPS). Polar residues predominate over residues 190-202 (TASTVIEEAQTSA). Positions 205-216 (DSHDDDTHRDDG) are enriched in basic and acidic residues. The tract at residues 411-476 (LMETLLQPFA…AVRYTATLEL (66 aa)) is binding to host EIF4G. The region spanning 479 to 597 (RVFREPSMVK…RLYSLPNPTA (119 aa)) is the RRM domain. Disordered stretches follow at residues 810–853 (GVYK…GNRA) and 876–984 (KVGP…RQEE). Tyr-812 is modified (phosphotyrosine; by host). Residues 913-923 (AGGRRFGRRNT) show a composition bias toward basic residues. Positions 945–958 (RGQQGEHPTTSPSA) are enriched in low complexity.

Belongs to the adenoviridae shutoff protein family. Monomer. Interacts with hexon protein; this interaction allows chaperoning and trimerization of hexon proteins. Interacts (via N-terminus) with host initiation factor EIF4G (via C-terminus). Interacts (via RRM domain) with viral mRNAs that contain the tripartite leader; this interaction allows ribosome shunting and expression of viral late mRNAs. Might be cleaved by the viral protease. In terms of processing, phosphorylated. Tyrosine phosphorylation enhances preferential binding to tripartite leader mRNAs and allows ribosome shunting. Post-translationally, methylated. Asymmetric dimethylation by host PRMT1 of the Arg/Gly-rich region may regulate shutoff protein binding to hexon and promote the capsid assembly in the nucleus.

Its subcellular location is the host cytoplasm. Functionally, protein that inhibits host translation while promoting late viral translation by ribosome shunting. Blocks host cap-dependent translation by binding to eIF4G, displacing MKNK1 from cap initiation complexes and preventing EIF4E phosphorylation. Binds to the tripartite leader sequence of viral late mRNAs and recruits host eIF4G, PABPC1/poly-A binding protein and 40S ribosomes subunits on viral mRNAs, allowing ribosome shunting and efficient translation of late viral mRNAs even though conventional translation via ribosome scanning from the cap has been shut off in the host cell. During assembly, acts as a chaperone protein that helps hexon proteins assembly into trimers. This is Shutoff protein from Galliformes (FAdV-1).